The primary structure comprises 113 residues: Large ribosomal subunit protein uL22 (113 aa).

Belongs to the universal ribosomal protein uL22 family. Part of the 50S ribosomal subunit.

Its function is as follows. This protein binds specifically to 23S rRNA; its binding is stimulated by other ribosomal proteins, e.g. L4, L17, and L20. It is important during the early stages of 50S assembly. It makes multiple contacts with different domains of the 23S rRNA in the assembled 50S subunit and ribosome. In terms of biological role, the globular domain of the protein is located near the polypeptide exit tunnel on the outside of the subunit, while an extended beta-hairpin is found that lines the wall of the exit tunnel in the center of the 70S ribosome. In Opitutus terrae (strain DSM 11246 / JCM 15787 / PB90-1), this protein is Large ribosomal subunit protein uL22.